A 119-amino-acid polypeptide reads, in one-letter code: Non-structural protein 3b (119 aa).

The DRBM domain occupies 3–79; that stretch reads YVSLLNQVWQ…AARKVCLRLQ (77 aa).

Interacts with host RUNX1 isoform b.

Its subcellular location is the host nucleus. It is found in the host nucleolus. The protein resides in the host mitochondrion. Functionally, induces host cell G0/G1 arrest and apoptosis. This Pipistrellus abramus (Japanese pipistrelle) protein is Non-structural protein 3b.